A 255-amino-acid polypeptide reads, in one-letter code: Glutamate racemase (255 aa).

Substrate-binding positions include 7–8 (DS) and 39–40 (YG). The Proton donor/acceptor role is filled by cysteine 70. Position 71-72 (71-72 (NT)) interacts with substrate. Residue cysteine 181 is the Proton donor/acceptor of the active site. 182–183 (TH) serves as a coordination point for substrate.

This sequence belongs to the aspartate/glutamate racemases family.

It catalyses the reaction L-glutamate = D-glutamate. The protein operates within cell wall biogenesis; peptidoglycan biosynthesis. Provides the (R)-glutamate required for cell wall biosynthesis. The chain is Glutamate racemase from Helicobacter pylori (strain ATCC 700392 / 26695) (Campylobacter pylori).